The chain runs to 602 residues: Elongation factor 4 (602 aa).

One can recognise a tr-type G domain in the interval 8-190; sequence DLIRNFSIVA…AIVHRLPPPK (183 aa). Residues 20–25 and 137–140 each bind GTP; these read DHGKST and NKID.

This sequence belongs to the TRAFAC class translation factor GTPase superfamily. Classic translation factor GTPase family. LepA subfamily.

Its subcellular location is the cell inner membrane. It catalyses the reaction GTP + H2O = GDP + phosphate + H(+). In terms of biological role, required for accurate and efficient protein synthesis under certain stress conditions. May act as a fidelity factor of the translation reaction, by catalyzing a one-codon backward translocation of tRNAs on improperly translocated ribosomes. Back-translocation proceeds from a post-translocation (POST) complex to a pre-translocation (PRE) complex, thus giving elongation factor G a second chance to translocate the tRNAs correctly. Binds to ribosomes in a GTP-dependent manner. The chain is Elongation factor 4 from Cereibacter sphaeroides (strain KD131 / KCTC 12085) (Rhodobacter sphaeroides).